We begin with the raw amino-acid sequence, 536 residues long: ATP synthase subunit beta (536 aa).

The disordered stretch occupies residues M1–Q57. Positions S30–N49 are enriched in polar residues. An ATP-binding site is contributed by G208–T215.

Belongs to the ATPase alpha/beta chains family. As to quaternary structure, F-type ATPases have 2 components, CF(1) - the catalytic core - and CF(0) - the membrane proton channel. CF(1) has five subunits: alpha(3), beta(3), gamma(1), delta(1), epsilon(1). CF(0) has three main subunits: a(1), b(2) and c(9-12). The alpha and beta chains form an alternating ring which encloses part of the gamma chain. CF(1) is attached to CF(0) by a central stalk formed by the gamma and epsilon chains, while a peripheral stalk is formed by the delta and b chains.

Its subcellular location is the cell inner membrane. The catalysed reaction is ATP + H2O + 4 H(+)(in) = ADP + phosphate + 5 H(+)(out). Produces ATP from ADP in the presence of a proton gradient across the membrane. The catalytic sites are hosted primarily by the beta subunits. The sequence is that of ATP synthase subunit beta from Bartonella quintana (strain Toulouse) (Rochalimaea quintana).